Reading from the N-terminus, the 1113-residue chain is Atrial natriuretic peptide-converting enzyme (1113 aa).

Residues M1–R112 lie on the Cytoplasmic side of the membrane. A helical; Signal-anchor for type II membrane protein transmembrane segment spans residues F113 to L133. The Extracellular portion of the chain corresponds to S134–G1113. N147, N202, and N208 each carry an N-linked (GlcNAc...) asparagine glycan. Residues A176 to N202 are disordered. In terms of domain architecture, FZ 1 spans R201–L327. Cystine bridges form between C206–C266, C214–C259, C250–C290, C279–C324, C283–C307, C337–C350, C345–C363, and C357–C372. N-linked (GlcNAc...) asparagine glycosylation is found at N298 and N317. 4 LDL-receptor class A domains span residues L336–C372, N373–C408, D409–C445, and S446–S483. N373 carries N-linked (GlcNAc...) asparagine glycosylation. 9 disulfides stabilise this stretch: C374–C386, C381–C399, C393–C408, C410–C423, C418–C436, C430–C445, C447–C460, C455–C473, and C467–C482. Residue N411 is glycosylated (N-linked (GlcNAc...) asparagine). N444 carries N-linked (GlcNAc...) asparagine glycosylation. Residues N481, N519, and N537 are each glycosylated (N-linked (GlcNAc...) asparagine). In terms of domain architecture, FZ 2 spans S518–P641. Disulfide bonds link C523/C586, C531/C579, C570/C608, C597/C638, C601/C625, C648/C660, C655/C673, C667/C682, C684/C698, C692/C711, C705/C720, C723/C735, C730/C748, and C742/C757. A glycan (N-linked (GlcNAc...) asparagine) is linked at N635. LDL-receptor class A domains follow at residues E647–C682, G683–S721, and F722–C757. An N-linked (GlcNAc...) asparagine glycan is attached at N719. The SRCR domain occupies V758 to S853. N765 and N828 each carry an N-linked (GlcNAc...) asparagine glycan. 6 disulfides stabilise this stretch: C782–C884, C857–C979, C895–C911, C993–C1058, C1022–C1037, and C1048–C1077. A Peptidase S1 domain is found at I869–Y1102. Residues H910 and D959 each act as charge relay system in the active site. N970 carries N-linked (GlcNAc...) asparagine glycosylation. S1052 serves as the catalytic Charge relay system. N-linked (GlcNAc...) asparagine glycosylation is present at N1089.

Belongs to the peptidase S1 family. N-glycosylated; required for processing and activation. Post-translationally, activated through proteolytic processing by a trypsin-like protease; cleaved into a N-terminal propeptide and an activated corin protease fragment. Atrial natriuretic peptide-converting enzyme, 180 kDa soluble fragment is produced by cleavage by ADAM10. Cleavage by ADAM10 to produce soluble 180 kDa soluble fragment takes place after the transmembrane region and before FZ 1. In terms of processing, a disulfide bond links the activated corin protease fragment and the N-terminal propeptide. The disulfide bond also links the activated corin protease fragment with Atrial natriuretic peptide-converting enzyme, 180 kDa soluble fragment. As to expression, highly expressed in heart. Also expressed in pregnant uterus.

It is found in the cell membrane. It localises to the secreted. In terms of biological role, serine-type endopeptidase involved in atrial natriuretic peptide (NPPA) processing. Converts through proteolytic cleavage the non-functional propeptide NPPA into the active hormone, thereby regulating blood pressure in heart and promoting natriuresis, diuresis and vasodilation. Proteolytic cleavage of pro-NPPA also plays a role in female pregnancy by promoting trophoblast invasion and spiral artery remodeling in uterus. Also acts as a regulator of sodium reabsorption in kidney. May also process pro-NPPB the B-type natriuretic peptide. The chain is Atrial natriuretic peptide-converting enzyme (Corin) from Mus musculus (Mouse).